A 335-amino-acid polypeptide reads, in one-letter code: L-tyrosine isonitrile synthase (335 aa).

It belongs to the isocyanide synthase family.

The catalysed reaction is D-ribulose 5-phosphate + L-tyrosine = (2S)-3-(4-hydroxyphenyl)-2-isocyanopropanoate + hydroxyacetone + formaldehyde + phosphate + H2O + H(+). In terms of biological role, involved in the biosynthesis of rhabduscin, a tyrosine derivative which is a potent inhibitor of phenoloxidase, a key component of the insect's innate immune system. Responsible for the synthesis of the isonitrile group on tyrosine using the C2 of ribulose 5-phosphate as the source of the carbon atom. This is L-tyrosine isonitrile synthase from Xenorhabdus nematophila (strain ATCC 19061 / DSM 3370 / CCUG 14189 / LMG 1036 / NCIMB 9965 / AN6).